We begin with the raw amino-acid sequence, 214 residues long: Redox-sensing transcriptional repressor Rex (214 aa).

Residues 17 to 56 (KYHRYLEELLKSDVDRISSKELSEKIGFTASQIRQDLNCF) constitute a DNA-binding region (H-T-H motif). Position 91 to 96 (91 to 96 (GAGNIG)) interacts with NAD(+).

The protein belongs to the transcriptional regulatory Rex family. As to quaternary structure, homodimer.

Its subcellular location is the cytoplasm. Modulates transcription in response to changes in cellular NADH/NAD(+) redox state. The protein is Redox-sensing transcriptional repressor Rex of Clostridium acetobutylicum (strain ATCC 824 / DSM 792 / JCM 1419 / IAM 19013 / LMG 5710 / NBRC 13948 / NRRL B-527 / VKM B-1787 / 2291 / W).